A 593-amino-acid chain; its full sequence is MDSSANINKALTETRFSDLEPPLSGDIIEALNQSDFEFCTPVQAATIPLLCSYKDVAVDAATGSGKTLAFVVPLVEILRRSTSFPPKPHQVMGVIISPTRELSTQIYNVAQPFVSTLANVNSVLLVGGREVKADMKIIEEEGCNVLIGTPGRLSDIMERMEILDFRNLEILILDEADRLLEMGFQRQVNYIISRLPKQRRTGLFSATQTEGVEELAKAGLRNPVRVEVRAKSKSESSQQLTNSKTPSGLHLEYMECEADKKSSQLVDLLIKNSDKKLIVFFMTCASVDYWGLVLSKIPALKSISLIPIHGDMKQNARDKALASFTKASSGALLCTDVAARGLDIPGIDYVVQYDPPQDPNMFNHRAGRTARLGRQGRAIVFLLPKEEAYVEFMRIRRVPLEERKCSEDASDVIPIIRSAAMKDRAVMEKGLKAFVSFVRAYKEHHCSFIFRWKDLEIGKLAMGYGLLYLPSMSEVKQHRLSSEGFTPVEGVKFEEIKFKDKYREKQRQQNLQVRKEKRQEEKKEKGKRKRVDASASNDPKKASRKLTGKQRQTIQTAEDEEVMDRDYKLMIKVKKGLIKEDEYERLTGDDDLF.

Residues 16-44 (FSDLEPPLSGDIIEALNQSDFEFCTPVQA) carry the Q motif motif. The 180-residue stretch at 47 to 226 (IPLLCSYKDV…KAGLRNPVRV (180 aa)) folds into the Helicase ATP-binding domain. 60 to 67 (AATGSGKT) serves as a coordination point for ATP. Residues 174 to 177 (DEAD) carry the DEAD box motif. The Helicase C-terminal domain occupies 264-411 (QLVDLLIKNS…ERKCSEDASD (148 aa)). Basic and acidic residues predominate over residues 506–524 (QRQQNLQVRKEKRQEEKKE). The interval 506–561 (QRQQNLQVRKEKRQEEKKEKGKRKRVDASASNDPKKASRKLTGKQRQTIQTAEDEE) is disordered.

It belongs to the DEAD box helicase family. DDX55/SPB4 subfamily.

It catalyses the reaction ATP + H2O = ADP + phosphate + H(+). In Arabidopsis thaliana (Mouse-ear cress), this protein is DEAD-box ATP-dependent RNA helicase 18 (RH18).